The chain runs to 474 residues: Coiled-coil domain-containing protein 174 (474 aa).

Disordered stretches follow at residues 39–86 (GVFG…REKL) and 129–170 (GATR…PSEE). Composition is skewed to basic and acidic residues over residues 64–86 (RAEK…REKL) and 129–142 (GATR…ERDA). The stretch at 64–98 (RAEKDAEQKLEEQKTLDKSREKLEEKAKLYEKMTK) forms a coiled coil. The span at 148-157 (NDDDDEEEFS) shows a compositional bias: acidic residues. S206 is subject to Phosphoserine. Positions 276–317 (LEMLREQTTDQRIKRENIKEKRKAILEARLAKLRQKKMKKSK) form a coiled coil. Disordered stretches follow at residues 309-372 (RQKK…IREW) and 389-461 (ELRA…VTFQ). Basic and acidic residues-rich tracts occupy residues 316-327 (SKVDGTEEESRA) and 356-372 (IQER…IREW). Positions 410–419 (RTGSLSSQPW) are enriched in polar residues. A compositionally biased stretch (low complexity) spans 430 to 453 (GHSSGQSQEPSSSHTSTPASESSP).

The protein localises to the nucleus. Its function is as follows. Probably involved in neuronal development. The protein is Coiled-coil domain-containing protein 174 (Ccdc174) of Rattus norvegicus (Rat).